A 1160-amino-acid chain; its full sequence is Major DNA-binding protein (1160 aa).

Positions 808–809 (FW) match the Required for filament formation motif. The interval 1139-1160 (ARGGEHAFDEDCGLLPAKRGRL) is required for nuclear localization.

The protein belongs to the herpesviridae major DNA-binding protein family. Homooligomers. Forms double-helical filaments necessary for the formation of replication compartments within the host nucleus. Interacts with the origin-binding protein. Interacts with the helicase primase complex; this interaction stimulates primer synthesis activity of the helicase-primase complex. Interacts with the DNA polymerase. Interacts with the alkaline exonuclease; this interaction increases its nuclease processivity.

It localises to the host nucleus. Functionally, single-stranded DNA-binding protein required for DNA replication. Plays several crucial roles in viral infection. Participates in the opening of the viral DNA origin to initiate replication by interacting with the origin-binding protein. May disrupt loops, hairpins and other secondary structures present on ssDNA to reduce and eliminate pausing of viral DNA polymerase at specific sites during elongation. Promotes viral DNA recombination by performing strand-transfer, characterized by the ability to transfer a DNA strand from a linear duplex to a complementary single-stranded DNA circle. Can also catalyze the renaturation of complementary single strands. Additionally, reorganizes the host cell nucleus, leading to the formation of prereplicative sites and replication compartments. This process is driven by the protein which can form double-helical filaments in the absence of DNA. In Simian cytomegalovirus (strain Colburn), this protein is Major DNA-binding protein.